We begin with the raw amino-acid sequence, 185 residues long: ATP synthase subunit b, chloroplastic (185 aa).

Residues 7-29 (SFVYLVGHCPFAGSFAFNTDILA) form a helical membrane-spanning segment.

The protein belongs to the ATPase B chain family. F-type ATPases have 2 components, F(1) - the catalytic core - and F(0) - the membrane proton channel. F(1) has five subunits: alpha(3), beta(3), gamma(1), delta(1), epsilon(1). F(0) has four main subunits: a(1), b(1), b'(1) and c(10-14). The alpha and beta chains form an alternating ring which encloses part of the gamma chain. F(1) is attached to F(0) by a central stalk formed by the gamma and epsilon chains, while a peripheral stalk is formed by the delta, b and b' chains.

The protein resides in the plastid. It is found in the chloroplast thylakoid membrane. Its function is as follows. F(1)F(0) ATP synthase produces ATP from ADP in the presence of a proton or sodium gradient. F-type ATPases consist of two structural domains, F(1) containing the extramembraneous catalytic core and F(0) containing the membrane proton channel, linked together by a central stalk and a peripheral stalk. During catalysis, ATP synthesis in the catalytic domain of F(1) is coupled via a rotary mechanism of the central stalk subunits to proton translocation. Functionally, component of the F(0) channel, it forms part of the peripheral stalk, linking F(1) to F(0). The chain is ATP synthase subunit b, chloroplastic from Dioscorea elephantipes (Elephant's foot yam).